Here is a 256-residue protein sequence, read N- to C-terminus: Methylesterase 9 (256 aa).

The Acyl-ester intermediate role is filled by Ser-78. Residues Asp-206 and His-234 each act as charge relay system in the active site.

It belongs to the AB hydrolase superfamily. Methylesterase family.

It catalyses the reaction methyl (indol-3-yl)acetate + H2O = (indol-3-yl)acetate + methanol + H(+). The enzyme catalyses methyl (-)-jasmonate + H2O = jasmonate + methanol + H(+). The catalysed reaction is methyl salicylate + H2O = salicylate + methanol + H(+). Its pathway is plant hormone biosynthesis. It functions in the pathway lipid metabolism; oxylipin biosynthesis. Esterase activity is down-regulated by salicylic acid (SA). Its function is as follows. Methylesterase shown to have carboxylesterase activity, methyl indole-3-acetic acid (MeIAA) esterase activity, methyl salicylate (MeSA) esterase activity and methyl jasmonate (MeJA) esterase activity in vitro. Required to convert methyl salicylate (MeSA) to salicylic acid (SA) as part of the signal transduction pathways that activate systemic acquired resistance in systemic tissue. MeSA is believed to be an inactive form that needs to be demethylated to exert a biological effect. This Arabidopsis thaliana (Mouse-ear cress) protein is Methylesterase 9.